Consider the following 404-residue polypeptide: Serine/threonine transporter SstT (404 aa).

9 consecutive transmembrane segments (helical) span residues 12–32, 53–73, 81–101, 140–160, 177–197, 216–236, 287–307, 329–349, and 356–376; these read GGNLVLRIAIGLVLGACLALV, AIAPILVFVLVLSAIANKEVG, ILVMYVLGTFVAALTAVVLSF, ALANANFIGILAWAIGLGIAL, AVSFVVKVVIAFAPIGVFGLV, LGVLLGAMVIVAFVLNPLIVF, VAIPLGATINMAGAAITVTVL, IVASVCACGASGVAGGSLLLI, and FNIPNDIAAQVIGVGFIIGVI.

It belongs to the dicarboxylate/amino acid:cation symporter (DAACS) (TC 2.A.23) family.

Its subcellular location is the cell inner membrane. The enzyme catalyses L-serine(in) + Na(+)(in) = L-serine(out) + Na(+)(out). The catalysed reaction is L-threonine(in) + Na(+)(in) = L-threonine(out) + Na(+)(out). In terms of biological role, involved in the import of serine and threonine into the cell, with the concomitant import of sodium (symport system). In Actinobacillus pleuropneumoniae serotype 7 (strain AP76), this protein is Serine/threonine transporter SstT.